Consider the following 289-residue polypeptide: Diaminopimelate epimerase (289 aa).

Substrate is bound by residues asparagine 13, glutamine 47, and asparagine 67. Cysteine 76 functions as the Proton donor in the catalytic mechanism. Residues 77-78 (GN), asparagine 167, asparagine 200, and 218-219 (ER) contribute to the substrate site. Residue cysteine 227 is the Proton acceptor of the active site. Residue 228-229 (GT) participates in substrate binding.

It belongs to the diaminopimelate epimerase family. Homodimer.

It localises to the cytoplasm. It carries out the reaction (2S,6S)-2,6-diaminopimelate = meso-2,6-diaminopimelate. It participates in amino-acid biosynthesis; L-lysine biosynthesis via DAP pathway; DL-2,6-diaminopimelate from LL-2,6-diaminopimelate: step 1/1. Functionally, catalyzes the stereoinversion of LL-2,6-diaminopimelate (L,L-DAP) to meso-diaminopimelate (meso-DAP), a precursor of L-lysine and an essential component of the bacterial peptidoglycan. The chain is Diaminopimelate epimerase from Burkholderia pseudomallei (strain 668).